Reading from the N-terminus, the 306-residue chain is uncharacterized protein (306 aa).

This is an uncharacterized protein from Escherichia coli (strain K12).